Here is a 475-residue protein sequence, read N- to C-terminus: AAA-ATPase At1g43910 (475 aa).

Residues 11-28 (VSAVFSLYTSFSAITMLF) form a helical membrane-spanning segment. A Phosphothreonine modification is found at T85. Residue 246 to 253 (GPPGTGKS) coordinates ATP. 2 disordered regions span residues 306–328 (SRRR…PQKR) and 453–475 (KGED…EAET). Residues 457–467 (SSVEEEGEIED) are compositionally biased toward acidic residues.

Belongs to the AAA ATPase family. BCS1 subfamily. The cofactor is Mg(2+). In terms of tissue distribution, expressed in developing shoots.

The protein localises to the membrane. The catalysed reaction is ATP + H2O = ADP + phosphate + H(+). This Arabidopsis thaliana (Mouse-ear cress) protein is AAA-ATPase At1g43910.